The chain runs to 210 residues: Phosphoheptose isomerase (210 aa).

In terms of domain architecture, SIS spans 38–202; that stretch reads IAACLARGGK…ENVAALAPYL (165 aa). 53–55 lines the substrate pocket; sequence NGG. 2 residues coordinate Zn(2+): His-62 and Glu-66. Substrate contacts are provided by residues Glu-66, 95-96, 121-123, Ser-126, and Gln-173; these read ND and STS. The Zn(2+) site is built by Gln-173 and His-181.

Belongs to the SIS family. GmhA subfamily. Homotetramer. Requires Zn(2+) as cofactor.

The protein localises to the cytoplasm. It carries out the reaction 2 D-sedoheptulose 7-phosphate = D-glycero-alpha-D-manno-heptose 7-phosphate + D-glycero-beta-D-manno-heptose 7-phosphate. Its pathway is carbohydrate biosynthesis; D-glycero-D-manno-heptose 7-phosphate biosynthesis; D-glycero-alpha-D-manno-heptose 7-phosphate and D-glycero-beta-D-manno-heptose 7-phosphate from sedoheptulose 7-phosphate: step 1/1. Catalyzes the isomerization of sedoheptulose 7-phosphate in D-glycero-D-manno-heptose 7-phosphate. The polypeptide is Phosphoheptose isomerase (Desulfovibrio desulfuricans (strain ATCC 27774 / DSM 6949 / MB)).